The following is a 32-amino-acid chain: MSDIN-like toxin proprotein 1 (32 aa).

A propeptide spanning residues 1 to 10 is cleaved from the precursor; the sequence is MSDINATCLP. Residues 11–17 constitute a cross-link (cyclopeptide (Ala-Pro)); it reads AWLALCP. Residues 18 to 32 constitute a propeptide that is removed on maturation; sequence CVGDDVNPTLTRGGT.

Belongs to the MSDIN fungal toxin family. Processed by the macrocyclase-peptidase enzyme POPB to yield a toxic cyclic heptapeptide. POPB first removes 10 residues from the N-terminus. Conformational trapping of the remaining peptide forces the enzyme to release this intermediate rather than proceed to macrocyclization. The enzyme rebinds the remaining peptide in a different conformation and catalyzes macrocyclization of the N-terminal 7 residues.

Probable toxin that belongs to the MSDIN-like toxin family responsible for a large number of food poisoning cases and deaths. The polypeptide is MSDIN-like toxin proprotein 1 (Amanita fuligineoides).